The following is a 250-amino-acid chain: Triosephosphate isomerase (250 aa).

A substrate-binding site is contributed by 9–11 (NWK). Catalysis depends on histidine 94, which acts as the Electrophile. Glutamate 165 acts as the Proton acceptor in catalysis. Residues glycine 171, serine 211, and 232 to 233 (GG) each bind substrate.

Belongs to the triosephosphate isomerase family. Homodimer.

It localises to the cytoplasm. The catalysed reaction is D-glyceraldehyde 3-phosphate = dihydroxyacetone phosphate. The protein operates within carbohydrate biosynthesis; gluconeogenesis. It functions in the pathway carbohydrate degradation; glycolysis; D-glyceraldehyde 3-phosphate from glycerone phosphate: step 1/1. Its function is as follows. Involved in the gluconeogenesis. Catalyzes stereospecifically the conversion of dihydroxyacetone phosphate (DHAP) to D-glyceraldehyde-3-phosphate (G3P). The sequence is that of Triosephosphate isomerase from Alkalilimnicola ehrlichii (strain ATCC BAA-1101 / DSM 17681 / MLHE-1).